A 134-amino-acid chain; its full sequence is Large-conductance mechanosensitive channel (134 aa).

A run of 2 helical transmembrane segments spans residues 16 to 36 (VIDL…VTAL) and 81 to 101 (GDFI…FIVV).

Belongs to the MscL family. As to quaternary structure, homopentamer.

It localises to the cell inner membrane. Its function is as follows. Channel that opens in response to stretch forces in the membrane lipid bilayer. May participate in the regulation of osmotic pressure changes within the cell. This Stenotrophomonas maltophilia (strain K279a) protein is Large-conductance mechanosensitive channel.